The following is a 319-amino-acid chain: Ribonuclease Z (319 aa).

Zn(2+)-binding residues include His62, His64, Asp66, His67, His139, Asp209, and His268. Catalysis depends on Asp66, which acts as the Proton acceptor.

It belongs to the RNase Z family. As to quaternary structure, homodimer. The cofactor is Zn(2+).

It carries out the reaction Endonucleolytic cleavage of RNA, removing extra 3' nucleotides from tRNA precursor, generating 3' termini of tRNAs. A 3'-hydroxy group is left at the tRNA terminus and a 5'-phosphoryl group is left at the trailer molecule.. Zinc phosphodiesterase, which displays some tRNA 3'-processing endonuclease activity. Probably involved in tRNA maturation, by removing a 3'-trailer from precursor tRNA. This Pseudomonas putida (strain ATCC 700007 / DSM 6899 / JCM 31910 / BCRC 17059 / LMG 24140 / F1) protein is Ribonuclease Z.